Here is a 274-residue protein sequence, read N- to C-terminus: Large ribosomal subunit protein uL2cz/uL2cy (274 aa).

The disordered stretch occupies residues 224–274; the sequence is NPVDHPHGGGEGRAPIGRKKPATPWGYPALGRRSRKRNKYSDNLILRRRSK.

The protein belongs to the universal ribosomal protein uL2 family. As to quaternary structure, part of the 50S ribosomal subunit.

The protein resides in the plastid. The protein localises to the chloroplast. This is Large ribosomal subunit protein uL2cz/uL2cy (rpl2-A) from Carica papaya (Papaya).